Reading from the N-terminus, the 399-residue chain is Maltose excess protein 1-like, chloroplastic (399 aa).

A chloroplast-targeting transit peptide spans 1–67 (MSSSVSSVRL…RRRRYALPPV (67 aa)). 9 helical membrane passes run 93-113 (FAGA…ILNA), 123-143 (ALFA…LSLL), 154-174 (AVIV…QLAM), 180-202 (LPQF…LNYF), 217-237 (ITIG…VPFI), 238-258 (PNSL…VVMA), 268-288 (INFV…WMPV), 306-326 (AFTM…AVFI), and 361-381 (FLAT…RDTI).

The protein localises to the plastid. Its subcellular location is the chloroplast inner membrane. Probable maltose transporter. Essential for the conversion of starch to sucrose in leaves at night, probably via the export of maltose from the chloroplast. The protein is Maltose excess protein 1-like, chloroplastic of Oryza sativa subsp. japonica (Rice).